A 329-amino-acid chain; its full sequence is Formimidoylglutamase (329 aa).

Positions 133, 159, 161, 163, 253, and 255 each coordinate Mn(2+).

The protein belongs to the arginase family. Mn(2+) serves as cofactor.

It catalyses the reaction N-formimidoyl-L-glutamate + H2O = formamide + L-glutamate. Its pathway is amino-acid degradation; L-histidine degradation into L-glutamate; L-glutamate from N-formimidoyl-L-glutamate (hydrolase route): step 1/1. Its function is as follows. Catalyzes the conversion of N-formimidoyl-L-glutamate to L-glutamate and formamide. The sequence is that of Formimidoylglutamase from Streptococcus gordonii (strain Challis / ATCC 35105 / BCRC 15272 / CH1 / DL1 / V288).